Consider the following 146-residue polypeptide: Large ribosomal subunit protein uL15 (146 aa).

The disordered stretch occupies residues 1–52; it reads MKLSNLSPKAGSKKRRRRVGRGIAAGQGASCGFGMRGQKSRSGTGTKAGFEG. The segment covering 11 to 20 has biased composition (basic residues); that stretch reads GSKKRRRRVG. A compositionally biased stretch (gly residues) spans 23–35; the sequence is IAAGQGASCGFGM.

It belongs to the universal ribosomal protein uL15 family. Part of the 50S ribosomal subunit.

Functionally, binds to the 23S rRNA. The sequence is that of Large ribosomal subunit protein uL15 from Picosynechococcus sp. (strain ATCC 27264 / PCC 7002 / PR-6) (Agmenellum quadruplicatum).